The following is a 411-amino-acid chain: MKNKNILEFLKKRGYIYQGSNFDLIEKELIKGTSFYIGFDPTADSLHVGHFLTMMAVKHLQKAGNNPVIVVGGGTGSVGDPSGRSEIRKILDRKTIDYNCECLKKQMSKFISFEGKNKAVMVNNADWLLKINWIEFLREFGVCFSVNKMLAAEAFKVRFEQESGLSFLEFNYMLMQAYDFYYLNQNYNVNIQLGGSDQWSNILAGVDLIRRKSSKEAFALTLNLLTKHDGTKMGKTATGAIWLDKNKTSPYEFYQYWLNIDDQDVERFLLLLTELDDKTISDLCKEKGKKIVEAKKVLASELTKMIHGQEELDKAIEQSKAAFENASDNLPTYELKASDLNNDYSIANILVVTKLSPSKAESRRLITSNAVSVNETKITDVNTKLEDLKIDQTNFTLHKGKKNHIKVIINK.

Tyr-36 is a binding site for L-tyrosine. The short motif at 41-50 is the 'HIGH' region element; that stretch reads PTADSLHVGH. L-tyrosine contacts are provided by Tyr-172 and Gln-176. Positions 232–236 match the 'KMSKS' region motif; it reads KMGKT. Lys-235 is an ATP binding site. Positions 344-409 constitute an S4 RNA-binding domain; it reads YSIANILVVT…GKKNHIKVII (66 aa).

Belongs to the class-I aminoacyl-tRNA synthetase family. TyrS type 1 subfamily. As to quaternary structure, homodimer.

Its subcellular location is the cytoplasm. The catalysed reaction is tRNA(Tyr) + L-tyrosine + ATP = L-tyrosyl-tRNA(Tyr) + AMP + diphosphate + H(+). Its function is as follows. Catalyzes the attachment of tyrosine to tRNA(Tyr) in a two-step reaction: tyrosine is first activated by ATP to form Tyr-AMP and then transferred to the acceptor end of tRNA(Tyr). This Malacoplasma penetrans (strain HF-2) (Mycoplasma penetrans) protein is Tyrosine--tRNA ligase.